A 255-amino-acid polypeptide reads, in one-letter code: Type III pantothenate kinase (255 aa).

An ATP-binding site is contributed by 6-13 (DIGNSNIV). Substrate contacts are provided by residues Tyr-100 and 107-110 (GSDR). Asp-109 acts as the Proton acceptor in catalysis. Asp-129 provides a ligand contact to K(+). Thr-132 serves as a coordination point for ATP. Thr-184 contributes to the substrate binding site.

The protein belongs to the type III pantothenate kinase family. As to quaternary structure, homodimer. It depends on NH4(+) as a cofactor. K(+) is required as a cofactor.

It is found in the cytoplasm. It carries out the reaction (R)-pantothenate + ATP = (R)-4'-phosphopantothenate + ADP + H(+). The protein operates within cofactor biosynthesis; coenzyme A biosynthesis; CoA from (R)-pantothenate: step 1/5. Its function is as follows. Catalyzes the phosphorylation of pantothenate (Pan), the first step in CoA biosynthesis. This is Type III pantothenate kinase from Brevibacillus brevis (strain 47 / JCM 6285 / NBRC 100599).